The primary structure comprises 482 residues: tRNA sulfurtransferase (482 aa).

Residues 61-165 (LAIRDALTRI…DDRLLLIKGR (105 aa)) form the THUMP domain. ATP-binding positions include 183-184 (LI), K265, G287, and Q296. The cysteines at positions 344 and 456 are disulfide-linked. The Rhodanese domain maps to 404–482 (FGPNDVILDI…GFNNVKVYRP (79 aa)). Residue C456 is the Cysteine persulfide intermediate of the active site.

Belongs to the ThiI family.

The protein resides in the cytoplasm. It catalyses the reaction [ThiI sulfur-carrier protein]-S-sulfanyl-L-cysteine + a uridine in tRNA + 2 reduced [2Fe-2S]-[ferredoxin] + ATP + H(+) = [ThiI sulfur-carrier protein]-L-cysteine + a 4-thiouridine in tRNA + 2 oxidized [2Fe-2S]-[ferredoxin] + AMP + diphosphate. It carries out the reaction [ThiS sulfur-carrier protein]-C-terminal Gly-Gly-AMP + S-sulfanyl-L-cysteinyl-[cysteine desulfurase] + AH2 = [ThiS sulfur-carrier protein]-C-terminal-Gly-aminoethanethioate + L-cysteinyl-[cysteine desulfurase] + A + AMP + 2 H(+). Its pathway is cofactor biosynthesis; thiamine diphosphate biosynthesis. Functionally, catalyzes the ATP-dependent transfer of a sulfur to tRNA to produce 4-thiouridine in position 8 of tRNAs, which functions as a near-UV photosensor. Also catalyzes the transfer of sulfur to the sulfur carrier protein ThiS, forming ThiS-thiocarboxylate. This is a step in the synthesis of thiazole, in the thiamine biosynthesis pathway. The sulfur is donated as persulfide by IscS. The protein is tRNA sulfurtransferase of Escherichia coli (strain ATCC 8739 / DSM 1576 / NBRC 3972 / NCIMB 8545 / WDCM 00012 / Crooks).